The sequence spans 684 residues: Endo-1,4-beta-xylanase A (684 aa).

The N-terminal stretch at 1 to 34 (MMRSLKSRKLVFILAMLFLINAIVSLKFITYSSA) is a signal peptide. CBM-cenC domains lie at 40–190 (KSKY…IKDL) and 193–342 (AYVL…ISDE). The GH10 domain maps to 350 to 678 (DYNLPSLCEK…KFAFWSLIDP (329 aa)). The active-site Proton donor is Glu490. Glu598 (nucleophile) is an active-site residue.

The protein belongs to the glycosyl hydrolase 10 (cellulase F) family.

The catalysed reaction is Endohydrolysis of (1-&gt;4)-beta-D-xylosidic linkages in xylans.. It participates in glycan degradation; xylan degradation. This Caldicellulosiruptor sp. (strain Rt8B.4) protein is Endo-1,4-beta-xylanase A (xynA).